We begin with the raw amino-acid sequence, 406 residues long: MGSPDSSSGSAQKPPRHQHQHQPPPPRRQGSAPELPPGFRFHPTDEELVVHYLKKKAAKAPLPVTIIAEVDLYKFDPWELPEKATFGEHEWYFFSPRDRKYANGARPNRAATSGYWKATGTDKPILASATGCGREKVGVKKALVFYRGKPPRGLKTNWIMHEYRLTGASAGSTTTSRPPPVTGGSRAPASLRLDDWVLCRIYKKTSKAAAAVGDEQRSMECEDSVEDAVTAYPPYATAGMAGAGAHGSNYVQLLHHHDSHEDNFQLDGLLTEHDVGLSAGAASLGHLAAAARATKQFLAPSSSTPFNWLEASTGGSILPQARNFPGFNRSRNVGSMSLSSTADDMAGAVDVSDGGNAVNAMYLPVQDGTYHQHVILGAPLAPEAIAGAATSGFQHHVQISGVNWNP.

A compositionally biased stretch (polar residues) spans Met-1 to Ala-11. The tract at residues Met-1 to Arg-40 is disordered. Positions Leu-35 to Lys-204 constitute an NAC domain. A DNA-binding region spans residues Val-137–Ala-210.

The protein localises to the nucleus. Transcription factor of the NAC family associated with the grain protein content (GPC). Accelerates senescence and increases nutrient remobilization from leaves to developing grains. Sequences of 11 European varieties of H.vulgare tested belongs to the same haplotype while the sequence found in H.spontaneum, an ancestor of the cultivated H.vulgare which has a higher GPC, belongs to an other haplotype. The chain is NAC transcription factor NAM-1 (NAM-1) from Hordeum vulgare subsp. vulgare (Domesticated barley).